The primary structure comprises 211 residues: RNA chaperone ProQ (211 aa).

The interval 113–147 is disordered; that stretch reads RRAVEKANNPKANKKRSVYHSGNKSENKKSAGKKF.

It belongs to the ProQ family.

Its subcellular location is the cytoplasm. In terms of biological role, RNA chaperone with significant RNA binding, RNA strand exchange and RNA duplexing activities. This chain is RNA chaperone ProQ, found in Histophilus somni (strain 129Pt) (Haemophilus somnus).